Consider the following 151-residue polypeptide: MKLILTTEVEHLGTAGDAVEVKDGYGRNYLLPRGLAIVATRGAERQANDIRRAREAKEIRGVEHANEIKQAIEGLGAVKLTVKTAGEGKLFGSVTAADVVGAIKAAGGPNLDKRTVTLPKAHIKQIGSYVLDVHLHAGVATKVTVDVVAEG.

Belongs to the bacterial ribosomal protein bL9 family.

In terms of biological role, binds to the 23S rRNA. In Mycobacteroides abscessus (strain ATCC 19977 / DSM 44196 / CCUG 20993 / CIP 104536 / JCM 13569 / NCTC 13031 / TMC 1543 / L948) (Mycobacterium abscessus), this protein is Large ribosomal subunit protein bL9.